The primary structure comprises 102 residues: Large ribosomal subunit protein bL21 (102 aa).

This sequence belongs to the bacterial ribosomal protein bL21 family. As to quaternary structure, part of the 50S ribosomal subunit. Contacts protein L20.

This protein binds to 23S rRNA in the presence of protein L20. This is Large ribosomal subunit protein bL21 from Shouchella clausii (strain KSM-K16) (Alkalihalobacillus clausii).